Here is a 268-residue protein sequence, read N- to C-terminus: Glutamate racemase (268 aa).

Residues aspartate 14–serine 15 and tyrosine 46–glycine 47 contribute to the substrate site. Catalysis depends on cysteine 78, which acts as the Proton donor/acceptor. Asparagine 79 to threonine 80 serves as a coordination point for substrate. The Proton donor/acceptor role is filled by cysteine 192. Threonine 193–histidine 194 contacts substrate.

This sequence belongs to the aspartate/glutamate racemases family.

The enzyme catalyses L-glutamate = D-glutamate. The protein operates within cell wall biogenesis; peptidoglycan biosynthesis. In terms of biological role, provides the (R)-glutamate required for cell wall biosynthesis. This Sphingopyxis alaskensis (strain DSM 13593 / LMG 18877 / RB2256) (Sphingomonas alaskensis) protein is Glutamate racemase.